The sequence spans 334 residues: MGEAGAAEEACRHMGTKEEFVKVRKKDLERLTTEVMQIRDFLPRILNGEVLESFQKLKIVEKNLERKEQELEQLKMDCEHFKARLETVQADNIREKKEKLALRQQLNEAKQQLLQQAEYCTEMGAAACTLLWGVSSSEEVVKAILGGDKALKFFSITGQTMESFVKSLDGDVQELDSDESQFVFALAGIVTNVAAIACGREFLVNSSRVLLDTILQLLGDLKPGQCTKLKVLMLMSLYNVSINLKGLKYISESPGFIPLLWWLLSDPDAEVCLHVLRLVQSVVLEPEVFSKSASEFRSSLPLQRILAMSKSRNPRLQTAAQELLEDLRTLEHNV.

The interaction with BRME1 stretch occupies residues 14-51; it reads MGTKEEFVKVRKKDLERLTTEVMQIRDFLPRILNGEVL. Positions 49 to 122 form a coiled coil; it reads EVLESFQKLK…LLQQAEYCTE (74 aa). An interaction with BRCA2 region spans residues 83 to 334; that stretch reads ARLETVQADN…EDLRTLEHNV (252 aa).

In terms of assembly, associates with HSF2. The interaction seems to occur between the trimerization domain of HSF2 and the N-terminal hydrophilic region of HSF2BP. Interacts (via C-terminus) with BNC1. Interacts (via N-terminus) with BRCA2 and BRME1; the interactions are direct and allow the formation of a ternary complex. The complex BRME1:HSF2BP:BRCA2 interacts with SPATA22, MEIOB and RAD51. Sumoylated by UBE2I in response to MEKK1-mediated stimuli. As to expression, testis specific. Overexpressed in some tumors.

The protein resides in the cytoplasm. It is found in the chromosome. Functionally, meiotic recombination factor component of recombination bridges involved in meiotic double-strand break repair. Modulates the localization of recombinases DMC1:RAD51 to meiotic double-strand break (DSB) sites through the interaction with BRCA2 and its recruitment during meiotic recombination. Indispensable for the DSB repair, homologous synapsis, and crossover formation that are needed for progression past metaphase I, is essential for spermatogenesis and male fertility. Required for proper recombinase recruitment in female meiosis. Inhibits BNC1 transcriptional activity during spermatogenesis, probably by sequestering it in the cytoplasm. May be involved in modulating HSF2 activation in testis. The protein is Heat shock factor 2-binding protein of Homo sapiens (Human).